A 195-amino-acid chain; its full sequence is 2-hydroxychromene-2-carboxylate isomerase (195 aa).

Ser-13 (nucleophile) is an active-site residue. Residue Ser-13 participates in glutathione binding. Residues Lys-45 and 55-56 contribute to the substrate site; that span reads NR. 181-184 is a glutathione binding site; sequence WGND.

Belongs to the GST superfamily. NadH family. Glutathione is required as a cofactor.

The enzyme catalyses 2-hydroxychromene-2-carboxylate = (3E)-4-(2-hydroxyphenyl)-2-oxobut-3-enoate. Activated by salicylate. In terms of biological role, involved in the naphthalene and naphthalenesulfonate catabolic pathway. Catalyzes the reversible glutathione-dependent isomerization of 2-hydroxychromene-2-carboxylate (HCCA) to trans-O-hydroxybenzylidenepyruvate (THBPA). It can also use 2-hydroxybenzo[g]chromene-2-carboxylate as substrate. In Sphingobium xenophagum, this protein is 2-hydroxychromene-2-carboxylate isomerase (nsaD).